The chain runs to 583 residues: 2-succinyl-5-enolpyruvyl-6-hydroxy-3-cyclohexene-1-carboxylate synthase (583 aa).

Belongs to the TPP enzyme family. MenD subfamily. Homodimer. Mg(2+) serves as cofactor. Mn(2+) is required as a cofactor. It depends on thiamine diphosphate as a cofactor.

The catalysed reaction is isochorismate + 2-oxoglutarate + H(+) = 5-enolpyruvoyl-6-hydroxy-2-succinyl-cyclohex-3-ene-1-carboxylate + CO2. It functions in the pathway quinol/quinone metabolism; 1,4-dihydroxy-2-naphthoate biosynthesis; 1,4-dihydroxy-2-naphthoate from chorismate: step 2/7. It participates in quinol/quinone metabolism; menaquinone biosynthesis. Catalyzes the thiamine diphosphate-dependent decarboxylation of 2-oxoglutarate and the subsequent addition of the resulting succinic semialdehyde-thiamine pyrophosphate anion to isochorismate to yield 2-succinyl-5-enolpyruvyl-6-hydroxy-3-cyclohexene-1-carboxylate (SEPHCHC). This Chlorobium limicola (strain DSM 245 / NBRC 103803 / 6330) protein is 2-succinyl-5-enolpyruvyl-6-hydroxy-3-cyclohexene-1-carboxylate synthase.